A 466-amino-acid polypeptide reads, in one-letter code: Nuclear pore complex protein Nup50 (466 aa).

Residues 1–14 (MAKRVAEKELTDRN) are compositionally biased toward basic and acidic residues. The disordered stretch occupies residues 1-22 (MAKRVAEKELTDRNWDEEDEVE). An N6-acetyllysine modification is found at Lys-8. A Phosphoserine modification is found at Ser-52. Repeat unit 1 spans residues 76–77 (FG). A 5 X 2 AA repeats of F-G region spans residues 76–302 (FGGSGGKPLE…FSAGSSSLFG (227 aa)). An N6-acetyllysine modification is found at Lys-82. Residues 112 to 113 (FG) form repeat 2. An N6-acetyllysine modification is found at Lys-126. Disordered regions lie at residues 128 to 150 (ISSP…STAC) and 200 to 257 (LENG…AEKK). Positions 131-150 (PKCNNSNQPPSSGPASSTAC) are enriched in polar residues. Residues 143 to 205 (GPASSTACPG…IEKQLENGGG (63 aa)) form a binding to CDKN1B region. At Ser-208 the chain carries Phosphoserine. Residues 225–226 (FG) form repeat 3. Polar residues predominate over residues 225–235 (FGSTKLQQESP). At Ser-234 the chain carries Phosphoserine. The segment covering 241–257 (NKAEDTSEKVEFTAEKK) has biased composition (basic and acidic residues). The residue at position 246 (Thr-246) is a Phosphothreonine. Ser-268 carries the phosphoserine modification. Repeat 4 spans residues 271 to 272 (FG). At Ser-294 the chain carries Phosphoserine. Residues 301-302 (FG) form repeat 5. Residues 316-343 (SAKASESPAGGGSSECRDGEEEENDEPP) form a disordered region. The RanBD1 domain occupies 333 to 466 (DGEEEENDEP…HKILLEKKDA (134 aa)). Residue Lys-351 forms a Glycyl lysine isopeptide (Lys-Gly) (interchain with G-Cter in SUMO2) linkage. Lys-448 is subject to N6-acetyllysine.

In terms of assembly, does not interact with TPR. Interacts with Importin alpha-2, Importin beta, Importin beta-2, NUP153, Ran binding protein 7, CDKN1B and itself. In terms of tissue distribution, widely expressed at low levels. Highest in the developing neural tube and adult testes.

It localises to the nucleus. The protein resides in the nuclear pore complex. Its subcellular location is the nucleus membrane. Component of the nuclear pore complex that has a direct role in nuclear protein import. Actively displaces NLSs from importin-alpha, and facilitates disassembly of the importin-alpha:beta-cargo complex and importin recycling. Interacts with regulatory proteins of cell cycle progression including CDKN1B. This interaction is required for correct intracellular transport and degradation of CDKN1B. This is Nuclear pore complex protein Nup50 (Nup50) from Mus musculus (Mouse).